The primary structure comprises 175 residues: Catabolic 3-dehydroquinase (175 aa).

Tyr26 acts as the Proton acceptor in catalysis. Substrate is bound by residues Asn104, His110, and Asp117. Residue His130 is the Proton donor of the active site. Substrate is bound by residues 131-132 (VS) and Arg141.

Belongs to the type-II 3-dehydroquinase family. In terms of assembly, homododecamer. Adopts a ring-like structure, composed of an arrangement of two hexameric rings stacked on top of one another.

The enzyme catalyses 3-dehydroquinate = 3-dehydroshikimate + H2O. It participates in aromatic compound metabolism; 3,4-dihydroxybenzoate biosynthesis; 3,4-dihydroxybenzoate from 3-dehydroquinate: step 1/2. Its function is as follows. Is involved in the catabolism of quinate. Allows the utilization of quinate as carbon source via the beta-ketoadipate pathway. This Sordaria macrospora (strain ATCC MYA-333 / DSM 997 / K(L3346) / K-hell) protein is Catabolic 3-dehydroquinase.